The sequence spans 107 residues: Heme-degrading monooxygenase (107 aa).

The ABM domain maps to 2–94 (IIVTNTAKIT…YILDNKISYY (93 aa)). Asn-6 contributes to the Fe cation binding site. His-76 is a heme binding site.

Belongs to the antibiotic biosynthesis monooxygenase family. Heme-degrading monooxygenase IsdG subfamily. Homodimer.

Its subcellular location is the cytoplasm. The enzyme catalyses heme b + 3 reduced [NADPH--hemoprotein reductase] + 3 O2 = biliverdin IXalpha + CO + Fe(2+) + 3 oxidized [NADPH--hemoprotein reductase] + 3 H2O + H(+). In terms of biological role, allows bacterial pathogens to use the host heme as an iron source. Catalyzes the oxidative degradation of the heme macrocyclic porphyrin ring to the biliverdin in the presence of a suitable electron donor such as ascorbate or NADPH--cytochrome P450 reductase, with subsequent release of free iron. The polypeptide is Heme-degrading monooxygenase (Bacillus cereus (strain AH187)).